The sequence spans 487 residues: PPE family protein PPE10 (487 aa).

Low complexity predominate over residues 398-424 (APVGGLDSGNPNPGSGSAAAGSGANPG). The interval 398 to 487 (APVGGLDSGN…PRIGQPVGSE (90 aa)) is disordered. Residues 428–446 (PGTSYPSFVNSGSNDSGLR) are compositionally biased toward polar residues.

This sequence belongs to the mycobacterial PPE family.

It is found in the secreted. Its function is as follows. Plays a major role in the integrity and stability of the capsule. This Mycobacterium tuberculosis (strain CDC 1551 / Oshkosh) protein is PPE family protein PPE10 (PPE10).